Here is a 324-residue protein sequence, read N- to C-terminus: tRNA U34 carboxymethyltransferase (324 aa).

Carboxy-S-adenosyl-L-methionine is bound by residues Lys92, Trp106, Lys111, Gly131, 153-155 (DPS), Met197, Tyr201, and Arg316.

It belongs to the class I-like SAM-binding methyltransferase superfamily. CmoB family. As to quaternary structure, homotetramer.

It carries out the reaction carboxy-S-adenosyl-L-methionine + 5-hydroxyuridine(34) in tRNA = 5-carboxymethoxyuridine(34) in tRNA + S-adenosyl-L-homocysteine + H(+). In terms of biological role, catalyzes carboxymethyl transfer from carboxy-S-adenosyl-L-methionine (Cx-SAM) to 5-hydroxyuridine (ho5U) to form 5-carboxymethoxyuridine (cmo5U) at position 34 in tRNAs. The protein is tRNA U34 carboxymethyltransferase of Hahella chejuensis (strain KCTC 2396).